The chain runs to 130 residues: Small ribosomal subunit protein uS8 (130 aa).

It belongs to the universal ribosomal protein uS8 family. As to quaternary structure, part of the 30S ribosomal subunit. Contacts proteins S5 and S12.

In terms of biological role, one of the primary rRNA binding proteins, it binds directly to 16S rRNA central domain where it helps coordinate assembly of the platform of the 30S subunit. In Enterobacter sp. (strain 638), this protein is Small ribosomal subunit protein uS8.